The chain runs to 444 residues: Viral protein kinase (444 aa).

The interval 1-25 is disordered; it reads MRWKRMERRPPLTPLRRSRTQSSGG. Residues 90–98 and lysine 108 contribute to the ATP site; that span reads LGRGAFGII. Aspartate 201 functions as the Proton acceptor in the catalytic mechanism.

Interacts with protein K-bZIP/K8. Interacts with host beta-catenin/CTNNB1. Post-translationally, AUtophosphorylated.

Its subcellular location is the host nucleus. The enzyme catalyses L-seryl-[protein] + ATP = O-phospho-L-seryl-[protein] + ADP + H(+). It carries out the reaction L-threonyl-[protein] + ATP = O-phospho-L-threonyl-[protein] + ADP + H(+). Serine/threonine protein kinase that plays a role in viral gene expression, viral DNA replication and encapsidation, and nuclear egress of virions. Regulates host transcriptional activity through interactions with RNA helicase and c-Jun N-terminal kinase (JNK) and viral transcriptional activity through interactions with the viral protein K-bZIP/K8. Induces host chromosome condensation and phosphorylation of histone H3. Phosphorylates the DNA polymerase processivity factor hence modulating its processivity function. Inhibits the host Wnt signaling pathway via direct interactions with beta-catenin/CTNNB1 while the kinase activity of vPK is not required for this inhibitory activity. Also phosphorylates host SAMHD1 and thereby counteracts its antiviral effect by reducing its dNTP hydrolase activity. This Human herpesvirus 8 type P (isolate GK18) (HHV-8) protein is Viral protein kinase (vPK).